A 264-amino-acid polypeptide reads, in one-letter code: Carbonic anhydrase 7 (264 aa).

One can recognise an Alpha-carbonic anhydrase domain in the interval 5–262; the sequence is HGWGYGQDDG…LKGRVVKASF (258 aa). His-66 functions as the Proton donor/acceptor in the catalytic mechanism. Zn(2+) contacts are provided by His-96, His-98, and His-121. 201 to 202 is a substrate binding site; the sequence is TT.

This sequence belongs to the alpha-carbonic anhydrase family. Requires Zn(2+) as cofactor.

The protein localises to the cytoplasm. The catalysed reaction is hydrogencarbonate + H(+) = CO2 + H2O. Its activity is regulated as follows. Activated by histamine, L-adrenaline, L- and D-histidine, and L- and D-phenylalanine. Inhibited by coumarins, sulfonamide derivatives such as acetazolamide (AZA), by saccharin and Foscarnet (phosphonoformate trisodium salt). In terms of biological role, reversible hydration of carbon dioxide. This is Carbonic anhydrase 7 (CA7) from Homo sapiens (Human).